The chain runs to 156 residues: Transcription elongation factor GreA (156 aa).

Positions 1–32 (MKKVRLTREGYEKLKKELEDLKRKFMYEISER) form a coiled coil.

This sequence belongs to the GreA/GreB family.

Necessary for efficient RNA polymerase transcription elongation past template-encoded arresting sites. The arresting sites in DNA have the property of trapping a certain fraction of elongating RNA polymerases that pass through, resulting in locked ternary complexes. Cleavage of the nascent transcript by cleavage factors such as GreA or GreB allows the resumption of elongation from the new 3'terminus. GreA releases sequences of 2 to 3 nucleotides. The polypeptide is Transcription elongation factor GreA (Thermotoga petrophila (strain ATCC BAA-488 / DSM 13995 / JCM 10881 / RKU-1)).